Here is a 211-residue protein sequence, read N- to C-terminus: Small ribosomal subunit protein uS3 (211 aa).

The KH type-2 domain occupies 38–106 (LRNFLKKRLF…EIYLNIQEVR (69 aa)).

The protein belongs to the universal ribosomal protein uS3 family. As to quaternary structure, part of the 30S ribosomal subunit. Forms a tight complex with proteins S10 and S14.

In terms of biological role, binds the lower part of the 30S subunit head. Binds mRNA in the 70S ribosome, positioning it for translation. The sequence is that of Small ribosomal subunit protein uS3 from Geobacter metallireducens (strain ATCC 53774 / DSM 7210 / GS-15).